The sequence spans 215 residues: 2-phospho-L-lactate guanylyltransferase (215 aa).

This sequence belongs to the CofC family. As to quaternary structure, homodimer.

The enzyme catalyses (2S)-2-phospholactate + GTP + H(+) = (2S)-lactyl-2-diphospho-5'-guanosine + diphosphate. The protein operates within cofactor biosynthesis; coenzyme F420 biosynthesis. Its function is as follows. Guanylyltransferase that catalyzes the activation of (2S)-2-phospholactate (2-PL) as (2S)-lactyl-2-diphospho-5'-guanosine, via the condensation of 2-PL with GTP. It is involved in the biosynthesis of coenzyme F420, a hydride carrier cofactor. This chain is 2-phospho-L-lactate guanylyltransferase, found in Methanococcoides burtonii (strain DSM 6242 / NBRC 107633 / OCM 468 / ACE-M).